We begin with the raw amino-acid sequence, 286 residues long: Pyridoxal kinase PdxY (286 aa).

Substrate contacts are provided by residues serine 9 and 44 to 45 (TQ). Residues aspartate 111, alanine 143, glutamate 148, lysine 181, and 208–211 (RPLV) each bind ATP. Aspartate 222 contributes to the substrate binding site.

This sequence belongs to the pyridoxine kinase family. PdxY subfamily. As to quaternary structure, homodimer. Mg(2+) is required as a cofactor.

It carries out the reaction pyridoxal + ATP = pyridoxal 5'-phosphate + ADP + H(+). It functions in the pathway cofactor metabolism; pyridoxal 5'-phosphate salvage; pyridoxal 5'-phosphate from pyridoxal: step 1/1. Pyridoxal kinase involved in the salvage pathway of pyridoxal 5'-phosphate (PLP). Catalyzes the phosphorylation of pyridoxal to PLP. This is Pyridoxal kinase PdxY from Pectobacterium atrosepticum (strain SCRI 1043 / ATCC BAA-672) (Erwinia carotovora subsp. atroseptica).